Reading from the N-terminus, the 335-residue chain is Biotin synthase (335 aa).

Positions 53–276 constitute a Radical SAM core domain; that stretch reads VEIEGIVSVK…RTILRFAGGR (224 aa). Residues C66, C70, and C73 each coordinate [4Fe-4S] cluster. C109, C142, C201, and R271 together coordinate [2Fe-2S] cluster.

The protein belongs to the radical SAM superfamily. Biotin synthase family. In terms of assembly, homodimer. It depends on [4Fe-4S] cluster as a cofactor. Requires [2Fe-2S] cluster as cofactor.

It carries out the reaction (4R,5S)-dethiobiotin + (sulfur carrier)-SH + 2 reduced [2Fe-2S]-[ferredoxin] + 2 S-adenosyl-L-methionine = (sulfur carrier)-H + biotin + 2 5'-deoxyadenosine + 2 L-methionine + 2 oxidized [2Fe-2S]-[ferredoxin]. It functions in the pathway cofactor biosynthesis; biotin biosynthesis; biotin from 7,8-diaminononanoate: step 2/2. Functionally, catalyzes the conversion of dethiobiotin (DTB) to biotin by the insertion of a sulfur atom into dethiobiotin via a radical-based mechanism. The protein is Biotin synthase of Acidothermus cellulolyticus (strain ATCC 43068 / DSM 8971 / 11B).